The following is a 101-amino-acid chain: MSKLSKIVKNEKRKVIVARYAARRQELKRIIAAPGTAPERRDEAQAALQKLPRDASPVRVRSRDVVDGRPRGILSRFGVSRIRFREMAHRGELPGITKSSW.

Belongs to the universal ribosomal protein uS14 family. As to quaternary structure, part of the 30S ribosomal subunit. Contacts proteins S3 and S10.

In terms of biological role, binds 16S rRNA, required for the assembly of 30S particles and may also be responsible for determining the conformation of the 16S rRNA at the A site. This chain is Small ribosomal subunit protein uS14, found in Tropheryma whipplei (strain TW08/27) (Whipple's bacillus).